The primary structure comprises 228 residues: Probable ribosomal RNA small subunit methyltransferase A (228 aa).

Residues His-9, Leu-11, Gly-34, Glu-55, Asp-78, and Asn-93 each contribute to the S-adenosyl-L-methionine site.

It belongs to the class I-like SAM-binding methyltransferase superfamily. rRNA adenine N(6)-methyltransferase family. RsmA subfamily.

It is found in the cytoplasm. Specifically dimethylates two adjacent adenosines in the loop of a conserved hairpin near the 3'-end of 16S rRNA in the 30S particle. May play a critical role in biogenesis of 30S subunits. This chain is Probable ribosomal RNA small subunit methyltransferase A, found in Pyrobaculum aerophilum (strain ATCC 51768 / DSM 7523 / JCM 9630 / CIP 104966 / NBRC 100827 / IM2).